Here is a 620-residue protein sequence, read N- to C-terminus: DNA primase (620 aa).

A CHC2-type zinc finger spans residues 38–62 (CPFHADQNPSMTVSVAKNIFKCFSC). In terms of domain architecture, Toprim spans 266–350 (LKLYLVEGYF…IVEVVDWNQA (85 aa)). Mg(2+) contacts are provided by Glu272, Asp319, and Asp321.

It belongs to the DnaG primase family. As to quaternary structure, monomer. Interacts with DnaB. Zn(2+) is required as a cofactor. The cofactor is Mg(2+).

The enzyme catalyses ssDNA + n NTP = ssDNA/pppN(pN)n-1 hybrid + (n-1) diphosphate.. Functionally, RNA polymerase that catalyzes the synthesis of short RNA molecules used as primers for DNA polymerase during DNA replication. This Mycoplasma pneumoniae (strain ATCC 29342 / M129 / Subtype 1) (Mycoplasmoides pneumoniae) protein is DNA primase.